A 218-amino-acid polypeptide reads, in one-letter code: Ras-related protein RabO (218 aa).

Residue 15–22 (GDYCVGKT) participates in GTP binding. Residues 37 to 45 (RNCNIGVDF) carry the Effector region motif. GTP-binding positions include 63–67 (DTGGQ) and 122–125 (NKID). Cys215 bears the Cysteine methyl ester mark. Cys215 carries S-geranylgeranyl cysteine lipidation. Residues 216 to 218 (FIL) constitute a propeptide, removed in mature form.

It belongs to the small GTPase superfamily. Rab family.

The protein localises to the cell membrane. The chain is Ras-related protein RabO (rabO) from Dictyostelium discoideum (Social amoeba).